Consider the following 152-residue polypeptide: Siroheme decarboxylase NirD subunit (152 aa).

Belongs to the Ahb/Nir family. In terms of assembly, probably forms a complex composed of NirD, NirL, NirG and NirH. All proteins are required for the total conversion of siroheme to didecarboxysiroheme.

It catalyses the reaction siroheme + 2 H(+) = 12,18-didecarboxysiroheme + 2 CO2. Its pathway is porphyrin-containing compound metabolism. Functionally, involved in heme d1 biosynthesis. Catalyzes the decarboxylation of siroheme into didecarboxysiroheme. This is Siroheme decarboxylase NirD subunit from Stutzerimonas stutzeri (Pseudomonas stutzeri).